The primary structure comprises 739 residues: Cellulose synthase catalytic subunit [UDP-forming] (739 aa).

4 helical membrane-spanning segments follow: residues 36 to 55 (VLVV…IISA), 59 to 76 (LYSQ…VLVL), 83 to 101 (LAIL…RYMF), and 116 to 138 (MFFG…FGYV). Residues 157-250 (EWPTVDVFIP…YIALFDADHV (94 aa)) form a catalytic subdomain A region. Residue Asp-199 is part of the active site. Substrate is bound by residues Asp-246 and Asp-248. The segment at 327–387 (EPLLEIGGVA…NQRIRWARGM (61 aa)) is catalytic subdomain B. Asp-343 is a catalytic residue. 4 helical membrane-spanning segments follow: residues 417 to 436 (FFYG…YLIF), 440 to 462 (IFHA…SSLT), 524 to 546 (PYLV…LIWG), and 551 to 573 (AVTV…AAVA). The region spanning 580 to 677 (QVRSEPRVSA…QSELVRLTFS (98 aa)) is the PilZ domain.

The protein belongs to the glycosyltransferase 2 family. It depends on Mg(2+) as a cofactor.

Its subcellular location is the cell inner membrane. The catalysed reaction is [(1-&gt;4)-beta-D-glucosyl](n) + UDP-alpha-D-glucose = [(1-&gt;4)-beta-D-glucosyl](n+1) + UDP + H(+). It participates in glycan metabolism; bacterial cellulose biosynthesis. Its activity is regulated as follows. Activated by bis-(3'-5') cyclic diguanylic acid (c-di-GMP). Its function is as follows. Catalytic subunit of cellulose synthase. It polymerizes uridine 5'-diphosphate glucose to cellulose, which is produced as an extracellular component responsible for the structural integrity and rigidity of self-supporting mats characteristic of the 'wrinkly spreader' phenotype. In Pseudomonas fluorescens (strain SBW25), this protein is Cellulose synthase catalytic subunit [UDP-forming] (bcsA).